The primary structure comprises 2282 residues: Cation channel sperm-associated targeting subunit tau (2282 aa).

Residues 1–118 form a disordered region; that stretch reads MELPPPGNRR…RGKGKGTGTR (118 aa). Composition is skewed to polar residues over residues 11 to 41 and 50 to 87; these read VSIN…SLKR and MMSN…NLSS. The span at 90–109 shows a compositional bias: basic and acidic residues; the sequence is YADEEGKPLTDKNKDKDKGR. The C2 domain maps to 131-266; sequence QSDEMAIANQ…IQKGCFTEVM (136 aa). 10 disordered regions span residues 397–416, 656–679, 747–1066, 1104–1153, 1217–1240, 1426–1445, 1452–1515, 1542–1569, 1908–1928, and 2187–2222; these read MTKR…SSAL, EHED…TWAE, NKLI…SHDP, SAKS…DKQS, YTND…TDDR, NSLL…DSRS, RQNT…SLDK, ERRQ…LEKT, NQAN…LKKQ, and PKKS…EPNK. 5 stretches are compositionally biased toward polar residues: residues 750–760, 783–792, 800–841, 849–858, and 953–974; these read ITDSSFNTTKP, SDPSSNTTKP, DPSS…SDLN, IVSTISSDPN, and SARS…TKLS. Residues 1104-1123 show a composition bias toward low complexity; the sequence is SAKSLDSNNSSASSSPTVNS. Positions 1124–1136 are enriched in polar residues; that stretch reads DTTTNAAEPSGTK. 2 stretches are compositionally biased toward polar residues: residues 1452–1466 and 1473–1482; these read RQNT…SSVS and DCQSISTQES. Over residues 1484–1493 the composition is skewed to basic and acidic residues; that stretch reads YPVRDTKSDS. The segment covering 1495 to 1504 has biased composition (acidic residues); sequence NDTEEMELDS. Basic and acidic residues-rich tracts occupy residues 1542-1555 and 1916-1925; these read ERRQ…ESLI and SPERPSDISL.

As to quaternary structure, component of the CatSper complex or CatSpermasome composed of the core pore-forming members CATSPER1, CATSPER2, CATSPER3 and CATSPER4 as well as auxiliary members CATSPERB, CATSPERG, CATSPERD, CATSPERE, CATSPERZ, C2CD6/CATSPERT, SLCO6C1, TMEM249, TMEM262 and EFCAB9. HSPA1 may be an additional auxiliary complex member. The core complex members CATSPER1, CATSPER2, CATSPER3 and CATSPER4 form a heterotetrameric channel. The auxiliary CATSPERB, CATSPERG, CATSPERD and CATSPERE subunits form a pavilion-like structure over the pore which stabilizes the complex through interactions with CATSPER4, CATSPER3, CATSPER1 and CATSPER2 respectively. SLCO6C1 interacts with CATSPERE and TMEM262/CATSPERH interacts with CATSPERB, further stabilizing the complex. C2CD6/CATSPERT interacts at least with CATSPERD and is required for targeting the CatSper complex in the flagellar membrane. In terms of tissue distribution, expressed in cauda sperm (at protein level).

It localises to the cell projection. The protein localises to the cilium. It is found in the flagellum membrane. Its function is as follows. Auxiliary component of the CatSper complex, a complex involved in sperm cell hyperactivation. Sperm cell hyperactivation is needed for sperm motility which is essential late in the preparation of sperm for fertilization. Required for CatSper complex targeting and trafficking into the quadrilinear nanodomains. Targets the preassembled CatSper complexes to elongating flagella, where it links the channel-carrying vesicles and motor proteins. The protein is Cation channel sperm-associated targeting subunit tau of Mus musculus (Mouse).